The chain runs to 393 residues: ATP phosphoribosyltransferase regulatory subunit (393 aa).

The protein belongs to the class-II aminoacyl-tRNA synthetase family. HisZ subfamily. Heteromultimer composed of HisG and HisZ subunits.

The protein localises to the cytoplasm. Its pathway is amino-acid biosynthesis; L-histidine biosynthesis; L-histidine from 5-phospho-alpha-D-ribose 1-diphosphate: step 1/9. In terms of biological role, required for the first step of histidine biosynthesis. May allow the feedback regulation of ATP phosphoribosyltransferase activity by histidine. The sequence is that of ATP phosphoribosyltransferase regulatory subunit from Synechococcus sp. (strain RCC307).